Consider the following 462-residue polypeptide: Glutamate--tRNA ligase (462 aa).

Residues 11–21 (PSPTGFIHLGN) carry the 'HIGH' region motif. Basic and acidic residues predominate over residues 120-131 (KPRYDGTWRPEP). The tract at residues 120–140 (KPRYDGTWRPEPGKTLPPIPA) is disordered. The 'KMSKS' region motif lies at 243 to 247 (KMSKR). K246 contributes to the ATP binding site.

It belongs to the class-I aminoacyl-tRNA synthetase family. Glutamate--tRNA ligase type 1 subfamily. Monomer.

It is found in the cytoplasm. It carries out the reaction tRNA(Glu) + L-glutamate + ATP = L-glutamyl-tRNA(Glu) + AMP + diphosphate. Its function is as follows. Catalyzes the attachment of glutamate to tRNA(Glu) in a two-step reaction: glutamate is first activated by ATP to form Glu-AMP and then transferred to the acceptor end of tRNA(Glu). The polypeptide is Glutamate--tRNA ligase (Polaromonas sp. (strain JS666 / ATCC BAA-500)).